The following is a 247-amino-acid chain: Proteasome subunit alpha (247 aa).

It belongs to the peptidase T1A family. As to quaternary structure, the 20S proteasome core is composed of 14 alpha and 14 beta subunits that assemble into four stacked heptameric rings, resulting in a barrel-shaped structure. The two inner rings, each composed of seven catalytic beta subunits, are sandwiched by two outer rings, each composed of seven alpha subunits. The catalytic chamber with the active sites is on the inside of the barrel. Has a gated structure, the ends of the cylinder being occluded by the N-termini of the alpha-subunits. Is capped at one or both ends by the proteasome regulatory ATPase, PAN.

Its subcellular location is the cytoplasm. Its activity is regulated as follows. The formation of the proteasomal ATPase PAN-20S proteasome complex, via the docking of the C-termini of PAN into the intersubunit pockets in the alpha-rings, triggers opening of the gate for substrate entry. Interconversion between the open-gate and close-gate conformations leads to a dynamic regulation of the 20S proteasome proteolysis activity. Its function is as follows. Component of the proteasome core, a large protease complex with broad specificity involved in protein degradation. The sequence is that of Proteasome subunit alpha from Methanosarcina acetivorans (strain ATCC 35395 / DSM 2834 / JCM 12185 / C2A).